The sequence spans 109 residues: Cell division suppressor protein YneA (109 aa).

The LysM domain occupies 39–90 (SEVNVSEGDSLWALADQYAGKSDMAKADFVSWVEKENNLADGHVEAGESVVI).

It belongs to the YneA family.

The protein resides in the cytoplasm. Inhibits cell division during the SOS response. Affects a later stage of the cell division protein assembly, after the assembly of the Z ring, by probably suppressing recruitment of FtsL and/or DivIC to the division machinery. The polypeptide is Cell division suppressor protein YneA (Listeria monocytogenes serotype 4b (strain F2365)).